Reading from the N-terminus, the 505-residue chain is Maturase K (505 aa).

It belongs to the intron maturase 2 family. MatK subfamily.

It localises to the plastid. The protein localises to the chloroplast. Usually encoded in the trnK tRNA gene intron. Probably assists in splicing its own and other chloroplast group II introns. The chain is Maturase K from Physcomitrium patens (Spreading-leaved earth moss).